Reading from the N-terminus, the 625-residue chain is 1-deoxy-D-xylulose-5-phosphate synthase (625 aa).

Thiamine diphosphate-binding positions include His-74 and 115 to 117 (GHS). Mg(2+) is bound at residue Asp-146. Residues 147–148 (GA), Asn-175, Tyr-286, and Glu-367 contribute to the thiamine diphosphate site. Asn-175 contributes to the Mg(2+) binding site.

The protein belongs to the transketolase family. DXPS subfamily. Homodimer. It depends on Mg(2+) as a cofactor. Thiamine diphosphate serves as cofactor.

It catalyses the reaction D-glyceraldehyde 3-phosphate + pyruvate + H(+) = 1-deoxy-D-xylulose 5-phosphate + CO2. It functions in the pathway metabolic intermediate biosynthesis; 1-deoxy-D-xylulose 5-phosphate biosynthesis; 1-deoxy-D-xylulose 5-phosphate from D-glyceraldehyde 3-phosphate and pyruvate: step 1/1. In terms of biological role, catalyzes the acyloin condensation reaction between C atoms 2 and 3 of pyruvate and glyceraldehyde 3-phosphate to yield 1-deoxy-D-xylulose-5-phosphate (DXP). The sequence is that of 1-deoxy-D-xylulose-5-phosphate synthase from Lachnoclostridium phytofermentans (strain ATCC 700394 / DSM 18823 / ISDg) (Clostridium phytofermentans).